The chain runs to 857 residues: ATP-dependent RNA helicase DDX24 (857 aa).

Positions 61 to 179 are disordered; that stretch reads NPSRLFSSEE…SPKLPKKSKK (119 aa). A phosphoserine mark is found at serine 80 and serine 92. Over residues 152–161 the composition is skewed to basic residues; it reads PRKKKNKGKK. Serine 170 is modified (phosphoserine). Residues 193 to 221 carry the Q motif motif; sequence SAWRDLFVPKAVLRALSFLGFSAPTPIQA. A Helicase ATP-binding domain is found at 225-528; the sequence is APAIRDKLDI…RILHKKHVKK (304 aa). An ATP-binding site is contributed by 238-245; sequence AETGSGKT. Residues 279–363 are disordered; sequence RFGATAHLGS…NEDGEEKFDA (85 aa). Phosphoserine is present on residues serine 288 and serine 296. A compositionally biased stretch (basic and acidic residues) spans 290–307; it reads CKDRTESGVLPEEARIET. Residues 309 to 330 are compositionally biased toward polar residues; sequence AQPSDSGVQATPETSASASAQT. The segment covering 345 to 363 has biased composition (basic and acidic residues); the sequence is LEEKPVPKQNEDGEEKFDA. Lysine 370 is covalently cross-linked (Glycyl lysine isopeptide (Lys-Gly) (interchain with G-Cter in SUMO2)). Positions 471 to 474 match the DEAD box motif; it reads DEAD. A Helicase C-terminal domain is found at 576-723; the sequence is DLYLYYFLMQ…LFPVQSKYMD (148 aa). Lysine 624 is covalently cross-linked (Glycyl lysine isopeptide (Lys-Gly) (interchain with G-Cter in SUMO2)). The tract at residues 808 to 857 is disordered; sequence RYPTQSGRPPQPVLASRNIESALSCLSRQKRRRKKPKEPRAPPQPGSSTS. Positions 825–834 are enriched in polar residues; sequence NIESALSCLS. Residues 835–844 show a composition bias toward basic residues; it reads RQKRRRKKPK. Residues 848–857 are compositionally biased toward pro residues; the sequence is APPQPGSSTS.

The protein belongs to the DEAD box helicase family. DDX24/MAK5 subfamily. Interacts with FADD. Interacts with RIPK1; this interaction disrupts RLR signaling activation of IFN-dependent transcription factor IRF7. Interacts with NIP7. Interacts with EP300; this interaction prevents TP53 acetylation mediated by EP300. In terms of processing, ubiquitinated by MDM2 without targeting DDX24 for proteasomal degradation. Instead, polyubiquitylated DDX24 promotes interaction with NIP7, a component of pre-rRNP processing complex, and associates with pre-rRNA molecules and pre-ribosomal particles.

It localises to the cytoplasm. The protein resides in the nucleus. It carries out the reaction ATP + H2O = ADP + phosphate + H(+). Its function is as follows. ATP-dependent RNA helicase that plays a role in various aspects of RNA metabolism including pre-mRNA splicing and is thereby involved in different biological processes such as cell cycle regulation or innate immunity. Plays an inhibitory role in TP53 transcriptional activity and subsequently in TP53 controlled cell growth arrest and senescence by inhibiting its EP300 mediated acetylation. Negatively regulates cytosolic RNA-mediated innate immune signaling at least in part by affecting RIPK1/IRF7 interactions. Alternatively, possesses antiviral activity by recognizing gammaherpesvirus transcripts in the context of lytic reactivation. Plays an essential role in cell cycle regulation in vascular smooth muscle cells by interacting with and regulating FANCA (Fanconi anemia complementation group A) mRNA. The polypeptide is ATP-dependent RNA helicase DDX24 (Ddx24) (Mus musculus (Mouse)).